Consider the following 438-residue polypeptide: Glyceraldehyde-3-phosphate dehydrogenase B, chloroplastic (438 aa).

A chloroplast-targeting transit peptide spans 1–53; that stretch reads CLSKKFEVAEFAGLRSSGCVTFSNKESSFFDVVSAQLTPKTTRSTPVKGETVA. Residues 64 to 65, D88, and R133 contribute to the NADP(+) site; that span reads RI. D-glyceraldehyde 3-phosphate contacts are provided by residues 207 to 209, T238, R253, 266 to 267, and R289; these read SCT and TG. C208 functions as the Nucleophile in the catalytic mechanism. An NADP(+)-binding site is contributed by N372.

The protein belongs to the glyceraldehyde-3-phosphate dehydrogenase family. In terms of assembly, tetramer of either four A chains (GAPDH 2) or two A and two B chains (GAPDH 1).

The protein resides in the plastid. Its subcellular location is the chloroplast. It catalyses the reaction D-glyceraldehyde 3-phosphate + phosphate + NADP(+) = (2R)-3-phospho-glyceroyl phosphate + NADPH + H(+). Its pathway is carbohydrate biosynthesis; Calvin cycle. The chain is Glyceraldehyde-3-phosphate dehydrogenase B, chloroplastic (GAPB) from Nicotiana tabacum (Common tobacco).